A 638-amino-acid polypeptide reads, in one-letter code: MTTETFEFQVEARQLLQLMIHSVYSNKDVFLRELVSNASDALDKLRLAALRDDAPDADVSDLHIELEVDKDARTLTVRDNGIGMSYDEVTRLIGTIANSGTAKFLEELREAKDAAGADGLIGQFGVGFYSGFMVADEVTLVTRHAGETEGTRWTSRGEGTYTLERIGEAPQGTAVTLHLKPADVENQLHDYTSAWKIKEIVKRYSDFITWPVRLLPEPGGDGSDGEGAEAREAETLNSMKALWARPRDEVSDDEYHELYKHIAHDWRDPLETIRLQAEGTFEYQALLFVPSHAPHDLFTQGYQRGVQLYVKRVFIMDDCEELLPPHLRFVKGVVDAQDLSLNVSREILQQDRHIRMIQRRLTKKVLSTVKDLRTSAPDRYATFWREFGAVLKEGLVTDSDNRDAILAACSFASTHDAEEPTALKDYVERMKEGQDDIYYMTGESRQAIENSPHMEAFRAKGVEVLLLTDAVDEVWVDAVGEYEGKTLRSVAKGEIDLSGTEADKSDAEKEKQGEEYAGLLGWMTEHLGEEVKEVRLSSRLTVSPACVVSDAGELTPALENMYRAMGQEVPGAKRILELNPEHQLVKSLNRAWTDRQDRAELTETAELLHALAVLAEGGRPKEPARFVQLMADRLERTL.

Residues methionine 1–arginine 345 are a; substrate-binding. A b region spans residues glutamate 346–asparagine 560. The c stretch occupies residues methionine 561–leucine 638.

This sequence belongs to the heat shock protein 90 family. Homodimer.

It localises to the cytoplasm. Molecular chaperone. Has ATPase activity. This is Chaperone protein HtpG from Streptomyces coelicolor (strain ATCC BAA-471 / A3(2) / M145).